A 111-amino-acid polypeptide reads, in one-letter code: Glutaredoxin-C2 (111 aa).

One can recognise a Glutaredoxin domain in the interval 3–103 (MQKAKEIVNS…PLLTEAGAIA (101 aa)). Residues Cys23 and Cys26 are joined by a disulfide bond.

This sequence belongs to the glutaredoxin family. CPYC subfamily.

It localises to the cytoplasm. Functionally, has a glutathione-disulfide oxidoreductase activity in the presence of NADPH and glutathione reductase. Reduces low molecular weight disulfides and proteins. This Arabidopsis thaliana (Mouse-ear cress) protein is Glutaredoxin-C2 (GRXC2).